The following is a 145-amino-acid chain: uncharacterized protein (145 aa).

The segment at 1–25 (MSENNENDGFNLDPDVKEELEETKS) is disordered. Positions 14-25 (PDVKEELEETKS) are enriched in basic and acidic residues.

This is an uncharacterized protein from His1 virus (isolate Australia/Victoria) (His1V).